The sequence spans 102 residues: Small ribosomal subunit protein uS10 (102 aa).

It belongs to the universal ribosomal protein uS10 family. Part of the 30S ribosomal subunit.

In terms of biological role, involved in the binding of tRNA to the ribosomes. The sequence is that of Small ribosomal subunit protein uS10 from Planobispora rosea.